We begin with the raw amino-acid sequence, 284 residues long: Tropomyosin alpha-1 chain (284 aa).

Met-1 carries the N-acetylmethionine modification. A disordered region spans residues Met-1–Gln-38. Residues Met-1 to Ile-284 are a coiled coil. A compositionally biased stretch (basic and acidic residues) spans Lys-12–Gln-38. Ala-31, Ser-45, and Lys-51 each carry phosphoserine. Positions Ala-116–Lys-136 are disordered. Phosphoserine occurs at positions 174, 186, and 206. N6-acetyllysine is present on Lys-213. Phosphoserine is present on Ser-252. Tyr-261 carries the phosphotyrosine modification. Phosphoserine is present on Ser-271. At Ser-283 the chain carries Phosphoserine; by DAPK1.

This sequence belongs to the tropomyosin family. In terms of assembly, homodimer. Heterodimer of an alpha (TPM1, TPM3 or TPM4) and a beta (TPM2) chain. Interacts with HRG (via the HRR domain); the interaction contributes to the antiangiogenic properties of the histidine/proline-rich region (HRR) of HRG. Interacts (via N-terminus) with LMOD2 (via N-terminus) and TMOD1 (via N-terminus). Phosphorylated at Ser-283 by DAPK1 in response to oxidative stress and this phosphorylation enhances stress fiber formation in endothelial cells. Detected in primary breast cancer tissues but undetectable in normal breast tissues in Sudanese patients. Isoform 1 is expressed in adult and fetal skeletal muscle and cardiac tissues, with higher expression levels in the cardiac tissues. Isoform 10 is expressed in adult and fetal cardiac tissues, but not in skeletal muscle.

The protein resides in the cytoplasm. It localises to the cytoskeleton. Functionally, binds to actin filaments in muscle and non-muscle cells. Plays a central role, in association with the troponin complex, in the calcium dependent regulation of vertebrate striated muscle contraction. Smooth muscle contraction is regulated by interaction with caldesmon. In non-muscle cells is implicated in stabilizing cytoskeleton actin filaments. This is Tropomyosin alpha-1 chain (TPM1) from Homo sapiens (Human).